Consider the following 492-residue polypeptide: Phosphatidylinositol 4-kinase type 2-beta (492 aa).

Residues 1 to 11 show a composition bias toward basic and acidic residues; that stretch reads MEPKQTADARD. Positions 1 to 98 are disordered; it reads MEPKQTADAR…SDRENMSGGH (98 aa). One can recognise a PI3K/PI4K catalytic domain in the interval 127-462; the sequence is GVFPERISQG…VQMPRVVVER (336 aa). The segment at 133–139 is G-loop; that stretch reads ISQGSSG. Residues Ser140 and Lys155 each coordinate ATP. An important for substrate binding region spans residues 160–162; sequence EPY. The segment at 168 to 181 is important for interaction with membranes; the sequence is KWTKYFHKICCPCC. ATP-binding positions include 264-267 and 278-279; these read QLFV and RK. The interval 271–279 is important for interaction with membranes; the sequence is KEADYWLRK. The segment at 308–316 is catalytic loop; the sequence is RNTDRGNDN. The tract at residues 353–373 is activation loop; the sequence is AIDNGLAFPFKHPDEWRAYPF. Residue Asp355 coordinates ATP. The interval 368 to 377 is important for interaction with membranes; that stretch reads WRAYPFHWAW.

It belongs to the PI3/PI4-kinase family. Type II PI4K subfamily.

Its subcellular location is the cytoplasm. The protein resides in the cytosol. The protein localises to the golgi apparatus membrane. It is found in the endoplasmic reticulum membrane. It localises to the cell membrane. Its subcellular location is the early endosome membrane. The catalysed reaction is a 1,2-diacyl-sn-glycero-3-phospho-(1D-myo-inositol) + ATP = a 1,2-diacyl-sn-glycero-3-phospho-(1D-myo-inositol 4-phosphate) + ADP + H(+). Contributes to the overall PI4-kinase activity of the cell. This contribution may be especially significant in plasma membrane, endosomal and Golgi compartments. The phosphorylation of phosphatidylinositol (PI) to PI4P is the first committed step in the generation of phosphatidylinositol 4,5-bisphosphate (PIP2), a precursor of the second messenger inositol 1,4,5-trisphosphate (InsP3). The polypeptide is Phosphatidylinositol 4-kinase type 2-beta (pi4k2b) (Xenopus tropicalis (Western clawed frog)).